The sequence spans 67 residues: Large ribosomal subunit protein uL29 (67 aa).

Belongs to the universal ribosomal protein uL29 family.

The protein is Large ribosomal subunit protein uL29 of Clostridioides difficile (strain 630) (Peptoclostridium difficile).